The following is a 123-amino-acid chain: Periplasmic [Fe] hydrogenase small subunit (123 aa).

A signal peptide (tat-type signal) is located at residues 1-34; that stretch reads MQIASITRRGFLKVACVTTGAALIGIRMTGKAVA. Residues 103–123 are disordered; that stretch reads TTAGKLPNPRASEFEGPYPYE.

As to quaternary structure, heterodimer of a large and a small subunit. In terms of processing, predicted to be exported by the Tat system. The position of the signal peptide cleavage has been experimentally proven.

Its subcellular location is the periplasm. It catalyses the reaction H2 + 2 oxidized [2Fe-2S]-[ferredoxin] = 2 reduced [2Fe-2S]-[ferredoxin] + 2 H(+). Functionally, may be involved in hydrogen uptake for the reduction of sulfate to hydrogen sulfide in an electron transport chain. Cytochrome c3 is likely to be the physiological electron carrier for the enzyme. This chain is Periplasmic [Fe] hydrogenase small subunit (hydB), found in Nitratidesulfovibrio vulgaris (strain ATCC 29579 / DSM 644 / CCUG 34227 / NCIMB 8303 / VKM B-1760 / Hildenborough) (Desulfovibrio vulgaris).